The chain runs to 457 residues: RuvB-like helicase 1 (457 aa).

Residue 73–80 (GGPSTGKT) participates in ATP binding.

Belongs to the RuvB family. May form heterododecamers with RVB2. Component of the SWR1 chromatin remodeling complex, the INO80 chromatin remodeling complex, and of the R2TP complex.

The protein localises to the nucleus. The catalysed reaction is ATP + H2O = ADP + phosphate + H(+). Its function is as follows. DNA helicase which participates in several chromatin remodeling complexes, including the SWR1 and the INO80 complexes. The SWR1 complex mediates the ATP-dependent exchange of histone H2A for the H2A variant HZT1 leading to transcriptional regulation of selected genes by chromatin remodeling. The INO80 complex remodels chromatin by shifting nucleosomes and is involved in DNA repair. Also involved in pre-rRNA processing. This Candida glabrata (strain ATCC 2001 / BCRC 20586 / JCM 3761 / NBRC 0622 / NRRL Y-65 / CBS 138) (Yeast) protein is RuvB-like helicase 1 (RVB1).